An 883-amino-acid chain; its full sequence is Translation initiation factor IF-2 (883 aa).

Over residues 32 to 45 the composition is skewed to polar residues; the sequence is NDLNGKNNSNSSIN. Disordered regions lie at residues 32–216 and 251–275; these read NDLN…QNKY and RKLG…AETE. Basic and acidic residues predominate over residues 46–62; that stretch reads LDKHNNKVEYSQNRDNR. Positions 75 to 216 are enriched in polar residues; sequence GGYSQNRDNR…VGKNTSQNKY (142 aa). The span at 251–260 shows a compositional bias: basic and acidic residues; it reads RKLGEKKKQQ. Residues 381–554 form the tr-type G domain; the sequence is EKPPVITIMG…DMMLLKANPS (174 aa). The tract at residues 390-397 is G1; sequence GHVDHGKT. 390-397 contacts GTP; that stretch reads GHVDHGKT. Residues 415–419 are G2; that stretch reads GITQH. The tract at residues 436–439 is G3; sequence DTPG. GTP is bound by residues 436-440 and 490-493; these read DTPGH and NKID. Positions 490–493 are G4; that stretch reads NKID. Positions 526–528 are G5; that stretch reads SAL.

It belongs to the TRAFAC class translation factor GTPase superfamily. Classic translation factor GTPase family. IF-2 subfamily.

It is found in the cytoplasm. One of the essential components for the initiation of protein synthesis. Protects formylmethionyl-tRNA from spontaneous hydrolysis and promotes its binding to the 30S ribosomal subunits. Also involved in the hydrolysis of GTP during the formation of the 70S ribosomal complex. The polypeptide is Translation initiation factor IF-2 (Borrelia garinii subsp. bavariensis (strain ATCC BAA-2496 / DSM 23469 / PBi) (Borreliella bavariensis)).